A 232-amino-acid polypeptide reads, in one-letter code: tRNA (guanine-N(1)-)-methyltransferase (232 aa).

S-adenosyl-L-methionine is bound by residues G114 and I134–L139.

The protein belongs to the RNA methyltransferase TrmD family. In terms of assembly, homodimer.

The protein resides in the cytoplasm. It carries out the reaction guanosine(37) in tRNA + S-adenosyl-L-methionine = N(1)-methylguanosine(37) in tRNA + S-adenosyl-L-homocysteine + H(+). Functionally, specifically methylates guanosine-37 in various tRNAs. The chain is tRNA (guanine-N(1)-)-methyltransferase from Wolbachia pipientis subsp. Culex pipiens (strain wPip).